Reading from the N-terminus, the 396-residue chain is Carbamoyl phosphate synthase small chain (396 aa).

The interval 1–204 (MTQHDNDPAW…WDKGFGQQDK (204 aa)) is CPSase. Positions 59, 256, and 258 each coordinate L-glutamine. The region spanning 208-396 (NVVAIDYGIK…AELMRQKKSA (189 aa)) is the Glutamine amidotransferase type-1 domain. C285 acts as the Nucleophile in catalysis. L-glutamine-binding residues include L286, Q289, N327, G329, and F330. Residues H369 and E371 contribute to the active site.

Belongs to the CarA family. In terms of assembly, composed of two chains; the small (or glutamine) chain promotes the hydrolysis of glutamine to ammonia, which is used by the large (or ammonia) chain to synthesize carbamoyl phosphate. Tetramer of heterodimers (alpha,beta)4.

The catalysed reaction is hydrogencarbonate + L-glutamine + 2 ATP + H2O = carbamoyl phosphate + L-glutamate + 2 ADP + phosphate + 2 H(+). The enzyme catalyses L-glutamine + H2O = L-glutamate + NH4(+). It participates in amino-acid biosynthesis; L-arginine biosynthesis; carbamoyl phosphate from bicarbonate: step 1/1. Its pathway is pyrimidine metabolism; UMP biosynthesis via de novo pathway; (S)-dihydroorotate from bicarbonate: step 1/3. Functionally, small subunit of the glutamine-dependent carbamoyl phosphate synthetase (CPSase). CPSase catalyzes the formation of carbamoyl phosphate from the ammonia moiety of glutamine, carbonate, and phosphate donated by ATP, constituting the first step of 2 biosynthetic pathways, one leading to arginine and/or urea and the other to pyrimidine nucleotides. The small subunit (glutamine amidotransferase) binds and cleaves glutamine to supply the large subunit with the substrate ammonia. The polypeptide is Carbamoyl phosphate synthase small chain (Bradyrhizobium diazoefficiens (strain JCM 10833 / BCRC 13528 / IAM 13628 / NBRC 14792 / USDA 110)).